A 291-amino-acid chain; its full sequence is Beta-lactamase CTX-M-1 (291 aa).

The first 28 residues, 1-28 (MVKKSLRQFTLMATATVTLLLGSVPLYA), serve as a signal peptide directing secretion. The active-site Nucleophile; acyl-ester intermediate is the S73. Residues K76, S133, E169, and S240 each contribute to the a beta-lactam site. E169 acts as the Proton acceptor in catalysis.

This sequence belongs to the class-A beta-lactamase family. Monomer.

The protein localises to the secreted. The enzyme catalyses a beta-lactam + H2O = a substituted beta-amino acid. Its activity is regulated as follows. Inhibited by the beta-lactamase-blocking agent clavulanic acid; in the TG1 strain. Functionally, extended-spectrum beta-lactamase (ESBL) which confers resistance to penicillins, as well as first, second and third-generation cephalosporins. Has cefotaxime-hydrolyzing activity. Inactive against the cephamycin antibiotic, cefoxitin, or against the carbapenem, imipenem. The chain is Beta-lactamase CTX-M-1 from Escherichia coli.